Reading from the N-terminus, the 3326-residue chain is Deoxyribonuclease CdiA (3326 aa).

Residues 36–342 (TADGVLTSGG…ARGALTLTGS (307 aa)) are two-partner system transport domain (TPS). The FHA-1 stretch occupies residues 343–1396 (YAGAGSLYSD…ITVRTGTLTN (1054 aa)). Residues 1397–1765 (QREGLVVTES…QQLGSPSLTD (369 aa)) form a receptor binding domain (RBD) region. The YP domain stretch occupies residues 1766 to 1951 (YPLPTSQSGL…LAQADKTNLQ (186 aa)). Residues 1959-2097 (SVSLSAGGDI…AGGPLQLAAG (139 aa)) form a periplasmic FHA-1 repeat (pFR) region. Residues 2125-2660 (QGLVQSTVAS…SNRYDSKQTS (536 aa)) are FHA-2. The short motif at 3060-3063 (VENN) is the VENN CT cleavage motif element. A CT domain region spans residues 3060-3326 (VENNSLGDIA…DRNRQIGVIK (267 aa)).

It in the N-terminal section; belongs to the CdiA toxin family. The C-terminal (CT) domain interacts with cognate CdiI but not non-cognate CdiI from E.coli strain 536 / UPEC.

The protein resides in the target cell. The protein localises to the target cell cytoplasm. In terms of biological role, toxic component of a toxin-immunity protein module, which functions as a cellular contact-dependent growth inhibition (CDI) system. CDI modules allow bacteria to communicate with and inhibit the growth of closely related neighboring bacteria in a contact-dependent fashion. CDI is neutralized by its cognate immunity protein CdiI, but not by non-cognate CdiI from other bacteria. The C-terminal domain (CT) has strong DNase activity; this activity is inhibited by cognate CdiI. The CdiA protein is thought to be exported from the cell through the central lumen of CdiB, the other half of its two-partner system (TPS). The TPS domain probably remains associated with CdiB while the FHA-1 domain forms an extended filament with the receptor-binding domain (RBD) at its extremity; in the secretion arrested state the C-terminus of the RBD and YP domains form a hairpin-like structure as the FHA-2, PT and CT domains are periplasmic. The YP domain is probably responsible for this arrest at the point where it re-enters the host cell periplasm. Upon binding to a target cell outer membrane receptor a signal is transmitted to activate secretion. The filament elongates slightly, the rest of CdiA is secreted and the FHA-2 domain becomes stably associated with the target cell's outer membrane where it facilitates entry of the toxic CT domain into the target cell periplasm. From there the toxic CT domain is cleaved and gains access to the target cell cytoplasm via an inner membrane protein. The sequence is that of Deoxyribonuclease CdiA from Dickeya dadantii (strain 3937) (Erwinia chrysanthemi (strain 3937)).